We begin with the raw amino-acid sequence, 563 residues long: Tripeptidyl-peptidase 1 (563 aa).

Residues 1–19 form the signal peptide; the sequence is MGPRSGLLGLFALFVAGKC. The propeptide at 20 to 195 is removed in mature form; sequence SYSPEPDQQR…PEPQVPGTVG (176 aa). C111 and C122 are joined by a disulfide. Residues 199–563 enclose the Peptidase S53 domain; that stretch reads GVTPSVIRKR…PALLKTLMNP (365 aa). N-linked (GlcNAc...) asparagine glycans are attached at residues N210 and N222. Active-site charge relay system residues include E272 and D276. N-linked (GlcNAc...) asparagine glycosylation is found at N286, N313, and N443. 2 cysteine pairs are disulfide-bonded: C365–C526 and C522–C537. S475 serves as the catalytic Charge relay system. Ca(2+)-binding residues include D517 and V518. 3 residues coordinate Ca(2+): G539, G541, and D543.

In terms of assembly, monomer. Interacts with CLN5. Interacts with CLN3. It depends on Ca(2+) as a cofactor. Activated by autocatalytic proteolytical processing upon acidification. N-glycosylation is required for processing and activity.

The protein localises to the lysosome. Its subcellular location is the melanosome. It carries out the reaction Release of an N-terminal tripeptide from a polypeptide, but also has endopeptidase activity.. In terms of biological role, lysosomal serine protease with tripeptidyl-peptidase I activity. May act as a non-specific lysosomal peptidase which generates tripeptides from the breakdown products produced by lysosomal proteinases. Requires substrates with an unsubstituted N-terminus. The sequence is that of Tripeptidyl-peptidase 1 (TPP1) from Bos taurus (Bovine).